The primary structure comprises 321 residues: tRNA uridine(34) hydroxylase (321 aa).

Residues 135–233 form the Rhodanese domain; the sequence is DDPDTLVIDT…YLEQVPEEES (99 aa). Cys-193 functions as the Cysteine persulfide intermediate in the catalytic mechanism. The interval 301 to 321 is disordered; the sequence is RQRQMDQLSSASSKKSDDFSL.

This sequence belongs to the TrhO family.

It carries out the reaction uridine(34) in tRNA + AH2 + O2 = 5-hydroxyuridine(34) in tRNA + A + H2O. Functionally, catalyzes oxygen-dependent 5-hydroxyuridine (ho5U) modification at position 34 in tRNAs. This is tRNA uridine(34) hydroxylase from Parasynechococcus marenigrum (strain WH8102).